We begin with the raw amino-acid sequence, 294 residues long: Probable 2-(5''-triphosphoribosyl)-3'-dephosphocoenzyme-A synthase (294 aa).

Belongs to the CitG/MdcB family.

The enzyme catalyses 3'-dephospho-CoA + ATP = 2'-(5''-triphospho-alpha-D-ribosyl)-3'-dephospho-CoA + adenine. In Streptococcus pyogenes serotype M3 (strain ATCC BAA-595 / MGAS315), this protein is Probable 2-(5''-triphosphoribosyl)-3'-dephosphocoenzyme-A synthase.